A 552-amino-acid polypeptide reads, in one-letter code: HTH-type transcriptional regulator SgrR (552 aa).

Residues 1–116 (MPSARLQQQF…LVSHLGRSFR (116 aa)) enclose the HTH marR-type domain. A DNA-binding region (H-T-H motif) is located at residues 26 to 49 (LNELAALLSCSRRHMRTLLNTMQD). The segment at 163–492 (ELEADIAHHW…IDWQVDAARW (330 aa)) is solute-binding.

Activates the small RNA gene sgrS under glucose-phosphate stress conditions as well as yfdZ. Represses its own transcription under both stress and non-stress conditions. Might act as a sensor of the intracellular accumulation of phosphoglucose by binding these molecules in its C-terminal solute-binding domain. The protein is HTH-type transcriptional regulator SgrR of Escherichia coli O157:H7.